Reading from the N-terminus, the 89-residue chain is MSLFRFFSKPASAPQARERLQVLLAHERASHEHSDLVAVLREEILAVIAKHIQIDRDKVSVKMDRGDQMSTLEVDIELPLKTKAKVRAA.

This sequence belongs to the MinE family.

Its function is as follows. Prevents the cell division inhibition by proteins MinC and MinD at internal division sites while permitting inhibition at polar sites. This ensures cell division at the proper site by restricting the formation of a division septum at the midpoint of the long axis of the cell. This is Cell division topological specificity factor from Brucella anthropi (strain ATCC 49188 / DSM 6882 / CCUG 24695 / JCM 21032 / LMG 3331 / NBRC 15819 / NCTC 12168 / Alc 37) (Ochrobactrum anthropi).